We begin with the raw amino-acid sequence, 33 residues long: Pheromone biosynthesis-activating neuropeptide (33 aa).

Residues 1-33 (LADDMPATMADQEVYRPEPEQIDSRNKYFSPRL) form a disordered region. The span at 13–26 (EVYRPEPEQIDSRN) shows a compositional bias: basic and acidic residues. A Leucine amide modification is found at leucine 33.

This sequence belongs to the pyrokinin family.

Its subcellular location is the secreted. Involved in the control of pheromone production in females. The sequence is that of Pheromone biosynthesis-activating neuropeptide from Lymantria dispar (Gypsy moth).